We begin with the raw amino-acid sequence, 590 residues long: Myo-inositol transporter 3C (590 aa).

At 1-63 the chain is on the cytoplasmic side; sequence MSRTPSSLDK…GEDKVTPYLC (63 aa). A helical transmembrane segment spans residues 64–86; that stretch reads FLISASAIAGFLFGYDTGVVGVA. Residues 87–105 are Extracellular-facing; the sequence is LPLVGTDLGGSVLSSSQQE. The helical transmembrane segment at 106–126 threads the bilayer; it reads IITAGTTIGAIFGSAILGGWG. Topologically, residues 127 to 132 are cytoplasmic; sequence DRLGRK. The helical transmembrane segment at 133-153 threads the bilayer; sequence VAILIADVFFTVGAVLIAASY. Topologically, residues 154–162 are extracellular; the sequence is SVPQMIVGR. Residues 163-183 form a helical membrane-spanning segment; the sequence is IVLGVGVGGAAAIAPLFITET. The Cytoplasmic segment spans residues 184–192; that stretch reads APTAVRGRC. A helical membrane pass occupies residues 193–213; it reads IGVNAFFIPFGQVISEAIGAG. Topologically, residues 214–222 are extracellular; it reads VQDMKNGWR. Residues 223 to 243 form a helical membrane-spanning segment; the sequence is LLFALGAVPSLFQLILFHYLP. The Cytoplasmic segment spans residues 244-325; the sequence is ESPRILILRG…TVSLIQMAGQ (82 aa). A helical membrane pass occupies residues 326 to 346; it reads LSGFNTLLYYAGTLFSLLGLT. Residues 347 to 349 lie on the Extracellular side of the membrane; that stretch reads NPA. The chain crosses the membrane as a helical span at residues 350–370; the sequence is LGGLIPAGTNAFFVLVGMTLV. The Cytoplasmic portion of the chain corresponds to 371–376; sequence DKVGRR. A helical membrane pass occupies residues 377–397; that stretch reads GLLMFGVPIMLAGLVWNIVAF. Residues 398-417 are Extracellular-facing; that stretch reads HYLCIPTGGLLDTSYKYDTK. A helical transmembrane segment spans residues 418–438; that stretch reads LVGIVIGGIVFFTTGFGLTYS. Topologically, residues 439 to 454 are cytoplasmic; it reads HLAWYQSEFLALEVRS. Residues 455–475 form a helical membrane-spanning segment; the sequence is VGSGIATTANWVANLVVSVSY. Residues 476–485 lie on the Extracellular side of the membrane; that stretch reads LTELETLTPS. The chain crosses the membrane as a helical span at residues 486–506; the sequence is GTYGLYLGFSVVFFIFAVFCY. Residues 507–590 lie on the Cytoplasmic side of the membrane; sequence PETKQLSIDE…NGAKRFPISR (84 aa).

This sequence belongs to the major facilitator superfamily. Sugar transporter (TC 2.A.1.1) family.

Its subcellular location is the cell membrane. The enzyme catalyses myo-inositol(out) + H(+)(out) = myo-inositol(in) + H(+)(in). In terms of biological role, major transporter for myo-inositol. Plays a role in the traversal of the host blood-brain barrier. The sequence is that of Myo-inositol transporter 3C from Cryptococcus neoformans var. grubii serotype A (strain H99 / ATCC 208821 / CBS 10515 / FGSC 9487) (Filobasidiella neoformans var. grubii).